Consider the following 277-residue polypeptide: Co-chaperone protein DjlA (277 aa).

At 1–6 (MRYWGK) the chain is on the periplasmic side. A helical transmembrane segment spans residues 7–31 (LLGLVLGVMYAPGVVGALLGLLVGH). Residues 32–277 (MVDRALGAKR…DLIKREKGFK (246 aa)) lie on the Cytoplasmic side of the membrane. In terms of domain architecture, J spans 211–277 (DACKVLGVNS…DLIKREKGFK (67 aa)).

Homodimer.

The protein localises to the cell inner membrane. Regulatory DnaK co-chaperone. Direct interaction between DnaK and DjlA is needed for the induction of the wcaABCDE operon, involved in the synthesis of a colanic acid polysaccharide capsule, possibly through activation of the RcsB/RcsC phosphotransfer signaling pathway. The colanic acid capsule may help the bacterium survive conditions outside the host. The chain is Co-chaperone protein DjlA from Yersinia pestis.